Consider the following 367-residue polypeptide: tRNA/tmRNA (uracil-C(5))-methyltransferase (367 aa).

S-adenosyl-L-methionine-binding residues include Gln190, Tyr218, Asn223, Glu239, and Asp299. Catalysis depends on Cys324, which acts as the Nucleophile. Glu358 (proton acceptor) is an active-site residue.

It belongs to the class I-like SAM-binding methyltransferase superfamily. RNA M5U methyltransferase family. TrmA subfamily.

It carries out the reaction uridine(54) in tRNA + S-adenosyl-L-methionine = 5-methyluridine(54) in tRNA + S-adenosyl-L-homocysteine + H(+). The enzyme catalyses uridine(341) in tmRNA + S-adenosyl-L-methionine = 5-methyluridine(341) in tmRNA + S-adenosyl-L-homocysteine + H(+). Dual-specificity methyltransferase that catalyzes the formation of 5-methyluridine at position 54 (m5U54) in all tRNAs, and that of position 341 (m5U341) in tmRNA (transfer-mRNA). The sequence is that of tRNA/tmRNA (uracil-C(5))-methyltransferase from Yersinia pestis bv. Antiqua (strain Antiqua).